Here is an 89-residue protein sequence, read N- to C-terminus: Probable Fe(2+)-trafficking protein (89 aa).

This sequence belongs to the Fe(2+)-trafficking protein family.

In terms of biological role, could be a mediator in iron transactions between iron acquisition and iron-requiring processes, such as synthesis and/or repair of Fe-S clusters in biosynthetic enzymes. The protein is Probable Fe(2+)-trafficking protein of Hahella chejuensis (strain KCTC 2396).